We begin with the raw amino-acid sequence, 101 residues long: Replication restart protein PriB (101 aa).

One can recognise an SSB domain in the interval 1–101 (MTTNNLVLSG…IHAENVELKT (101 aa)).

This sequence belongs to the PriB family. Homodimer. Interacts with PriA and DnaT. Component of the replication restart primosome. Primosome assembly occurs via a 'hand-off' mechanism. PriA binds to replication forks, subsequently PriB then DnaT bind; DnaT then displaces ssDNA to generate the helicase loading substrate.

Its function is as follows. Involved in the restart of stalled replication forks, which reloads the replicative helicase on sites other than the origin of replication; the PriA-PriB pathway is the major replication restart pathway. During primosome assembly it facilitates complex formation between PriA and DnaT on DNA; stabilizes PriA on DNA. Stimulates the DNA unwinding activity of PriA helicase. The sequence is that of Replication restart protein PriB from Shewanella oneidensis (strain ATCC 700550 / JCM 31522 / CIP 106686 / LMG 19005 / NCIMB 14063 / MR-1).